The chain runs to 269 residues: MATH domain and coiled-coil domain-containing protein At2g01790 (269 aa).

Positions 6-134 constitute an MATH domain; that stretch reads AVKKLWVINN…NGEVDIVAEV (129 aa). The stretch at 228-269 forms a coiled coil; that stretch reads KLDWLEKKLKETGKSRLQEIEEDLKDLKVKCADMDALLEFLR.

This is MATH domain and coiled-coil domain-containing protein At2g01790 from Arabidopsis thaliana (Mouse-ear cress).